A 197-amino-acid chain; its full sequence is Dephospho-CoA kinase (197 aa).

The DPCK domain occupies 2 to 197 (IIGITGGIAS…SALLSLANPR (196 aa)). 10 to 15 (ASGKST) is a binding site for ATP.

Belongs to the CoaE family.

The protein resides in the cytoplasm. The catalysed reaction is 3'-dephospho-CoA + ATP = ADP + CoA + H(+). The protein operates within cofactor biosynthesis; coenzyme A biosynthesis; CoA from (R)-pantothenate: step 5/5. In terms of biological role, catalyzes the phosphorylation of the 3'-hydroxyl group of dephosphocoenzyme A to form coenzyme A. This Streptococcus pyogenes serotype M3 (strain ATCC BAA-595 / MGAS315) protein is Dephospho-CoA kinase.